A 634-amino-acid chain; its full sequence is Formate--tetrahydrofolate ligase (634 aa).

78–85 is an ATP binding site; sequence TPLGEGKS.

Belongs to the formate--tetrahydrofolate ligase family. As to quaternary structure, homodimer.

The catalysed reaction is (6S)-5,6,7,8-tetrahydrofolate + formate + ATP = (6R)-10-formyltetrahydrofolate + ADP + phosphate. It participates in one-carbon metabolism; tetrahydrofolate interconversion. In Arabidopsis thaliana (Mouse-ear cress), this protein is Formate--tetrahydrofolate ligase (THFS).